The sequence spans 70 residues: DNA-directed RNA polymerase subunit omega (70 aa).

Belongs to the RNA polymerase subunit omega family. The RNAP catalytic core consists of 2 alpha, 1 beta, 1 beta' and 1 omega subunit. When a sigma factor is associated with the core the holoenzyme is formed, which can initiate transcription.

It carries out the reaction RNA(n) + a ribonucleoside 5'-triphosphate = RNA(n+1) + diphosphate. Promotes RNA polymerase assembly. Latches the N- and C-terminal regions of the beta' subunit thereby facilitating its interaction with the beta and alpha subunits. This Staphylococcus haemolyticus (strain JCSC1435) protein is DNA-directed RNA polymerase subunit omega.